The following is a 312-amino-acid chain: Pollen allergen Phl p 5.0101 (312 aa).

The signal sequence occupies residues 1–25 (MAVHQYTVALFLAVALVAGPAASYA).

It belongs to the Poa p IX/Phl p VI allergen family.

It localises to the secreted. The chain is Pollen allergen Phl p 5.0101 from Phleum pratense (Common timothy).